Here is a 216-residue protein sequence, read N- to C-terminus: Probable RNA 2'-phosphotransferase 2 (216 aa).

This sequence belongs to the KptA/TPT1 family.

Functionally, removes the 2'-phosphate from RNA via an intermediate in which the phosphate is ADP-ribosylated by NAD followed by a presumed transesterification to release the RNA and generate ADP-ribose 1''-2''-cyclic phosphate (APPR&gt;P). May function as an ADP-ribosylase. This is Probable RNA 2'-phosphotransferase 2 (kptA2) from Archaeoglobus fulgidus (strain ATCC 49558 / DSM 4304 / JCM 9628 / NBRC 100126 / VC-16).